The primary structure comprises 218 residues: Adenylate kinase (218 aa).

Residue 10–15 (GAGKGT) participates in ATP binding. Residues 30–59 (STGDMIRETIKSGSVLGQELKKVLDAGELV) form an NMP region. AMP is bound by residues Thr31, Arg36, 57–59 (ELV), and Gln92. Residues 122-159 (GRRIHPASGRTYHTKFNPPKVADKDDVTGEPLITRTDD) form an LID region. Residues Arg123 and 132–133 (TY) contribute to the ATP site. Residues Arg156 and Arg167 each contribute to the AMP site. ATP is bound at residue Gln202.

This sequence belongs to the adenylate kinase family. In terms of assembly, monomer.

The protein resides in the cytoplasm. It catalyses the reaction AMP + ATP = 2 ADP. The protein operates within purine metabolism; AMP biosynthesis via salvage pathway; AMP from ADP: step 1/1. Catalyzes the reversible transfer of the terminal phosphate group between ATP and AMP. Plays an important role in cellular energy homeostasis and in adenine nucleotide metabolism. The chain is Adenylate kinase from Francisella tularensis subsp. holarctica (strain LVS).